Reading from the N-terminus, the 108-residue chain is Large ribosomal subunit protein bL31B (108 aa).

Positions 86-108 are disordered; the sequence is KPETVVEDVLPKGKKKSPAKKKK. Residues 97–108 show a composition bias toward basic residues; the sequence is KGKKKSPAKKKK.

It belongs to the bacterial ribosomal protein bL31 family. Type B subfamily. As to quaternary structure, part of the 50S ribosomal subunit.

This Chlamydia trachomatis serovar L2 (strain ATCC VR-902B / DSM 19102 / 434/Bu) protein is Large ribosomal subunit protein bL31B.